We begin with the raw amino-acid sequence, 375 residues long: 23S rRNA (uracil(747)-C(5))-methyltransferase RlmC (375 aa).

Cys-3, Cys-11, Cys-14, and Cys-87 together coordinate [4Fe-4S] cluster. Residues Gln-212, Phe-241, Glu-262, and Asn-307 each coordinate S-adenosyl-L-methionine. Cys-334 (nucleophile) is an active-site residue.

Belongs to the class I-like SAM-binding methyltransferase superfamily. RNA M5U methyltransferase family. RlmC subfamily.

The catalysed reaction is uridine(747) in 23S rRNA + S-adenosyl-L-methionine = 5-methyluridine(747) in 23S rRNA + S-adenosyl-L-homocysteine + H(+). In terms of biological role, catalyzes the formation of 5-methyl-uridine at position 747 (m5U747) in 23S rRNA. In Escherichia coli O157:H7, this protein is 23S rRNA (uracil(747)-C(5))-methyltransferase RlmC.